Consider the following 115-residue polypeptide: Ribonuclease P protein component (115 aa).

It belongs to the RnpA family. In terms of assembly, consists of a catalytic RNA component (M1 or rnpB) and a protein subunit.

The enzyme catalyses Endonucleolytic cleavage of RNA, removing 5'-extranucleotides from tRNA precursor.. In terms of biological role, RNaseP catalyzes the removal of the 5'-leader sequence from pre-tRNA to produce the mature 5'-terminus. It can also cleave other RNA substrates such as 4.5S RNA. The protein component plays an auxiliary but essential role in vivo by binding to the 5'-leader sequence and broadening the substrate specificity of the ribozyme. This chain is Ribonuclease P protein component, found in Bacillus cereus (strain 03BB102).